A 91-amino-acid chain; its full sequence is Small ribosomal subunit protein bS18 (91 aa).

Belongs to the bacterial ribosomal protein bS18 family. As to quaternary structure, part of the 30S ribosomal subunit. Forms a tight heterodimer with protein bS6.

Functionally, binds as a heterodimer with protein bS6 to the central domain of the 16S rRNA, where it helps stabilize the platform of the 30S subunit. This Paraburkholderia phytofirmans (strain DSM 17436 / LMG 22146 / PsJN) (Burkholderia phytofirmans) protein is Small ribosomal subunit protein bS18.